The chain runs to 74 residues: U3-agatoxin-Ao1h (74 aa).

A signal peptide spans 1 to 20; it reads MRAIISLLLISTMVFGVIEA. The propeptide occupies 21–34; that stretch reads VSVQKSLKIFEGER. Intrachain disulfides connect Cys37/Cys53, Cys44/Cys58, Cys52/Cys68, and Cys60/Cys66. Asn72 is subject to Asparagine amide.

The protein belongs to the neurotoxin 07 (Beta/delta-agtx) family. 03 (aga-4) subfamily. Aga sub-subfamily. Expressed by the venom gland.

It is found in the secreted. Insecticidal neurotoxin that induces an irreversible spastic paralysis when injected into insects. Modifies presynaptic voltage-gated sodium channels (Nav), causing them to open at the normal resting potential of the nerve. This leads to spontaneous release of neurotransmitter and repetitive action potentials in motor neurons. The chain is U3-agatoxin-Ao1h from Agelena orientalis (Funnel-web spider).